The primary structure comprises 318 residues: tRNA uridine(34) hydroxylase (318 aa).

In terms of domain architecture, Rhodanese spans 123-217 (EDDDTVIIDA…YGKDPETKGQ (95 aa)). Cys177 (cysteine persulfide intermediate) is an active-site residue.

Belongs to the TrhO family.

The catalysed reaction is uridine(34) in tRNA + AH2 + O2 = 5-hydroxyuridine(34) in tRNA + A + H2O. In terms of biological role, catalyzes oxygen-dependent 5-hydroxyuridine (ho5U) modification at position 34 in tRNAs. The sequence is that of tRNA uridine(34) hydroxylase from Staphylococcus aureus (strain Mu3 / ATCC 700698).